The chain runs to 433 residues: MLVVELIIVLLAIFLGARLGGIGIGFAGGLGVLVLAAIGVKPGNIPFDVISIIMAVIAAISAMQVAGGLDYLVHQTEKLLRRNPKYITILAPIVTYFLTIFAGTGNISLATLPVIAEVAKEQGVKPCRPLSTAVVSAQIAITASPISAAVVYMSSVMEGHGISYLHLLSVVIPSTLLAVLVMSFLVTMLFNSKLSDDPIYRKRLEEGLVELRGEKQIEIKSGAKTSVWLFLLGVVGVVIYAIINSPSMGLVEKPLMNTTNAILIIMLSVATLTTVICKVDTDNILNSSTFKAGMSACICILGVAWLGDTFVSNNIDWIKDTAGEVIQGHPWLLAVIFFFASALLYSQAATAKALMPMALALNVSPLTAVASFAAVSGLFILPTYPTLVAAVQMDDTGTTRIGKFVFNHPFFIPGTLGVALAVCFGFVLGSFML.

The chain crosses the membrane as a helical span at residues 1 to 18 (MLVVELIIVLLAIFLGAR). Position 19 (Leu-19) is a topological domain, cytoplasmic. The chain crosses the membrane as a helical span at residues 20-37 (GGIGIGFAGGLGVLVLAA). The Periplasmic portion of the chain corresponds to 38–53 (IGVKPGNIPFDVISII). The helical transmembrane segment at 54-71 (MAVIAAISAMQVAGGLDY) threads the bilayer. Over 72–85 (LVHQTEKLLRRNPK) the chain is Cytoplasmic. Residues 86–103 (YITILAPIVTYFLTIFAG) traverse the membrane as a helical segment. Over 104-132 (TGNISLATLPVIAEVAKEQGVKPCRPLST) the chain is Periplasmic. Residues 133–147 (AVVSAQIAITASPIS) form a helical membrane-spanning segment. Residues 148-228 (AAVVYMSSVM…IKSGAKTSVW (81 aa)) are Cytoplasmic-facing. Residues 229–246 (LFLLGVVGVVIYAIINSP) traverse the membrane as a helical segment. Residues 247 to 264 (SMGLVEKPLMNTTNAILI) are Periplasmic-facing. A helical transmembrane segment spans residues 265–282 (IMLSVATLTTVICKVDTD). Topologically, residues 283 to 292 (NILNSSTFKA) are cytoplasmic. The helical transmembrane segment at 293-310 (GMSACICILGVAWLGDTF) threads the bilayer. Residues 311–332 (VSNNIDWIKDTAGEVIQGHPWL) are Periplasmic-facing. The chain crosses the membrane as a helical span at residues 333 to 350 (LAVIFFFASALLYSQAAT). Residues 351–355 (AKALM) are Cytoplasmic-facing. Residues 356–373 (PMALALNVSPLTAVASFA) traverse the membrane as a helical segment. Residues 374–433 (AVSGLFILPTYPTLVAAVQMDDTGTTRIGKFVFNHPFFIPGTLGVALAVCFGFVLGSFML) are Periplasmic-facing.

The protein belongs to the DcuA/DcuB transporter (TC 2.A.13.1) family.

The protein resides in the cell inner membrane. It catalyses the reaction fumarate(in) + L-aspartate(out) = fumarate(out) + L-aspartate(in). It carries out the reaction fumarate(in) + succinate(out) = fumarate(out) + succinate(in). The catalysed reaction is (S)-malate(in) + succinate(out) = (S)-malate(out) + succinate(in). The enzyme catalyses L-aspartate(in) + succinate(out) = L-aspartate(out) + succinate(in). Its function is as follows. Responsible for the transport of C4-dicarboxylates during aerobic and anaerobic growth. Required for the uptake of L-aspartate as a nitrogen source during aerobic growth. The uptake of L-aspartate in aerobic conditions is coupled to the excretion of fumarate, resulting in the net uptake of nitrogen without carbon uptake. In addition, during anaerobic growth, catalyzes the uptake of fumarate, malate or aspartate coupled to the export of succinate. May play a a general role in anaerobic C4-dicarboxylate transport. This is C4-dicarboxylate transporter DcuA (dcuA) from Escherichia coli O157:H7.